Here is a 468-residue protein sequence, read N- to C-terminus: 3-isopropylmalate dehydratase large subunit (468 aa).

Residues Cys349, Cys409, and Cys412 each contribute to the [4Fe-4S] cluster site.

It belongs to the aconitase/IPM isomerase family. LeuC type 1 subfamily. As to quaternary structure, heterodimer of LeuC and LeuD. The cofactor is [4Fe-4S] cluster.

It catalyses the reaction (2R,3S)-3-isopropylmalate = (2S)-2-isopropylmalate. It participates in amino-acid biosynthesis; L-leucine biosynthesis; L-leucine from 3-methyl-2-oxobutanoate: step 2/4. Catalyzes the isomerization between 2-isopropylmalate and 3-isopropylmalate, via the formation of 2-isopropylmaleate. The sequence is that of 3-isopropylmalate dehydratase large subunit from Jannaschia sp. (strain CCS1).